A 1548-amino-acid chain; its full sequence is Zinc finger MYM-type protein 4 (1548 aa).

The residue at position 2 (A2) is an N-acetylalanine. A Phosphothreonine modification is found at T107. S110 and S122 each carry phosphoserine. Residues K140 and K149 each participate in a glycyl lysine isopeptide (Lys-Gly) (interchain with G-Cter in SUMO2) cross-link. S162 carries the post-translational modification Phosphoserine. A disordered region spans residues 162 to 189 (SKETFSGKEKNRDLTYEREKRLDKPHKD). K195 is covalently cross-linked (Glycyl lysine isopeptide (Lys-Gly) (interchain with G-Cter in SUMO2)). At S197 the chain carries Phosphoserine. Glycyl lysine isopeptide (Lys-Gly) (interchain with G-Cter in SUMO2) cross-links involve residues K201 and K232. At S242 the chain carries Phosphoserine. K250 is covalently cross-linked (Glycyl lysine isopeptide (Lys-Gly) (interchain with G-Cter in SUMO1); alternate). K250 is covalently cross-linked (Glycyl lysine isopeptide (Lys-Gly) (interchain with G-Cter in SUMO2); alternate). Residues K260, K271, K273, K289, K327, K400, K428, and K430 each participate in a glycyl lysine isopeptide (Lys-Gly) (interchain with G-Cter in SUMO2) cross-link. 9 MYM-type zinc fingers span residues 362–402 (QLFC…PKDV), 414–457 (KDFC…RHEV), 464–499 (HKLC…GSGQ), 510–544 (KKFC…AEMI), 554–592 (ELFC…QYHL), 600–631 (RNFC…LSQG), 708–742 (FQFC…KETV), 749–788 (KSFC…LVQN), and 795–829 (EEFC…SESL). Phosphoserine is present on S1030. Residues K1035 and K1061 each participate in a glycyl lysine isopeptide (Lys-Gly) (interchain with G-Cter in SUMO2) cross-link. Phosphoserine is present on residues S1064 and S1071. Glycyl lysine isopeptide (Lys-Gly) (interchain with G-Cter in SUMO2) cross-links involve residues K1080 and K1127. A compositionally biased stretch (basic and acidic residues) spans 1124-1134 (SELKQFSKGET). Disordered regions lie at residues 1124 to 1183 (SELK…KSIV) and 1231 to 1260 (KCGG…QESS). The segment covering 1160 to 1181 (SRTRRRHRDGFPQPRRRGRKKS) has biased composition (basic residues). Phosphoserine occurs at positions 1181 and 1256. Over residues 1237–1260 (QASSSPRSDPLGSTQDHALSQESS) the composition is skewed to polar residues. K1431 participates in a covalent cross-link: Glycyl lysine isopeptide (Lys-Gly) (interchain with G-Cter in SUMO2). S1539, S1542, and S1547 each carry phosphoserine.

In terms of tissue distribution, expressed at higher level in heart, skeletal muscle, kidney and liver.

Plays a role in the regulation of cell morphology and cytoskeletal organization. The polypeptide is Zinc finger MYM-type protein 4 (ZMYM4) (Homo sapiens (Human)).